Reading from the N-terminus, the 372-residue chain is Cytochrome b (372 aa).

A run of 4 helical transmembrane segments spans residues 25-45, 69-90, 105-125, and 170-190; these read FGSMLLTCSALQIMTGFFLSM, WMMQNLHAIGASMFFICVYIHV, WLSGTTLLIMLMATAFFGYVL, and FFALHFILPFGIISLSSLHIM. Heme b is bound by residues His75 and His89. The heme b site is built by His174 and His188. His193 contacts a ubiquinone. A run of 4 helical transmembrane segments spans residues 218–238, 280–300, 312–332, and 339–358; these read YKDLFMISSMIMIMLLTISFI, LGGALALAMSIMILLTVPFTH, FMQLMFWTLVATFMIITWTAT, and YTMISQVTSSLYFMFFMSNP.

It belongs to the cytochrome b family. In terms of assembly, the cytochrome bc1 complex contains 3 respiratory subunits (MT-CYB, CYC1 and UQCRFS1), 2 core proteins (UQCRC1 and UQCRC2) and probably 6 low-molecular weight proteins. Heme b serves as cofactor.

It localises to the mitochondrion inner membrane. In terms of biological role, component of the ubiquinol-cytochrome c reductase complex (complex III or cytochrome b-c1 complex) that is part of the mitochondrial respiratory chain. The b-c1 complex mediates electron transfer from ubiquinol to cytochrome c. Contributes to the generation of a proton gradient across the mitochondrial membrane that is then used for ATP synthesis. The chain is Cytochrome b (MT-CYB) from Acrantophis madagascariensis (Madagascar ground boa).